The chain runs to 62 residues: Large ribosomal subunit protein uL30 (62 aa).

It belongs to the universal ribosomal protein uL30 family. As to quaternary structure, part of the 50S ribosomal subunit.

The sequence is that of Large ribosomal subunit protein uL30 from Prosthecochloris aestuarii (strain DSM 271 / SK 413).